Reading from the N-terminus, the 344-residue chain is L-rhamnose-proton symporter (344 aa).

A run of 10 helical transmembrane segments spans residues 4 to 24 (AITMGIFWHLIGAASAACFYA), 38 to 58 (WSVGGIVSWLILPWAISALLL), 68 to 88 (FNLSTLLPVFLFGAMWGIGNI), 101 to 121 (MGIGIAIGITLIVGTLMTPII), 137 to 157 (TLLGVFVALIGVGIVTRAGQL), 175 to 195 (LLLAVMCGIFSAGMSFAMNAA), 214 to 234 (LPSYVVIMGGGALVNLGFCFI), 259 to 279 (ILLSALGGLMWYLQFFFYAWG), 290 to 310 (MSWMLHMSFYVLCGGLVGLVL), and 321 to 341 (VAVLSLGCVVIIIAANIVGLG).

The protein belongs to the L-rhamnose transporter (TC 2.A.7.6) family.

The protein resides in the cell inner membrane. The catalysed reaction is L-rhamnopyranose(in) + H(+)(in) = L-rhamnopyranose(out) + H(+)(out). Functionally, uptake of L-rhamnose across the cytoplasmic membrane with the concomitant transport of protons into the cell (symport system). This is L-rhamnose-proton symporter from Salmonella gallinarum (strain 287/91 / NCTC 13346).